Consider the following 327-residue polypeptide: Zinc transport protein ZntB (327 aa).

Over 1-273 (MDAIKGSELQ…ARRTYTMSLM (273 aa)) the chain is Cytoplasmic. Residues 274–294 (AMVFLPSTFLTGLFGVNLGGI) form a helical membrane-spanning segment. At 295 to 300 (PGNSWH) the chain is on the periplasmic side. Residues 301 to 321 (LGFSLFCLMLVVVIGGVAWWL) form a helical membrane-spanning segment. Over 322–327 (HRSKWL) the chain is Cytoplasmic.

This sequence belongs to the CorA metal ion transporter (MIT) (TC 1.A.35) family.

Its subcellular location is the cell inner membrane. The enzyme catalyses Zn(2+)(out) + H(+)(out) = Zn(2+)(in) + H(+)(in). Zinc transporter. Acts as a Zn(2+):proton symporter, which likely mediates zinc ion uptake. The sequence is that of Zinc transport protein ZntB from Klebsiella pneumoniae subsp. pneumoniae (strain ATCC 700721 / MGH 78578).